The following is a 121-amino-acid chain: Trypsin/alpha-amylase inhibitor CMX1/CMX3 (121 aa).

The signal sequence occupies residues 1–24 (MAFKHQLILSTAILLAVLAAASAS).

The protein belongs to the protease inhibitor I6 (cereal trypsin/alpha-amylase inhibitor) family.

Its subcellular location is the secreted. The polypeptide is Trypsin/alpha-amylase inhibitor CMX1/CMX3 (Triticum aestivum (Wheat)).